The sequence spans 366 residues: Protein sigma-NS (366 aa).

An important for ssRNA-binding and formation of complexes region spans residues 1-11 (MASSLRAAISK).

This sequence belongs to the orthoreovirus sigma-NS protein family. In terms of assembly, homooligomer; in presence of RNA. Interacts with protein mu-NS; this interaction allows the localization of sigma-NS to the viral factories. Interacts with host G3BP1 (via C-terminus); this interaction induces the relocalization of G3BP1 and other SG proteins to the viral factories periphery.

The protein resides in the host cytoplasm. Functionally, protein that binds to ssRNA and participates with protein mu-NS in forming the matrix of viral factories, which are large inclusions in the host cytoplasm where replication intermediates are assembled and viral RNA replication takes place. Plays a role in the inhibition of the integrated stress response (ISR) to escape from host cell translational shutoff. Participates in the disruption of stress granules (SG) through its association with host G3BP1 and mu-NS. This chain is Protein sigma-NS (S3), found in Mammalia (T2J).